Consider the following 262-residue polypeptide: Proline-rich protein 23C (262 aa).

Disordered regions lie at residues 1 to 52 (MGSR…AGTP) and 225 to 262 (VPSSPLQPLPPSPSPGPHARPELPERPPCKVRRRLFQE). Over residues 226–242 (PSSPLQPLPPSPSPGPH) the composition is skewed to pro residues. A compositionally biased stretch (basic and acidic residues) spans 243 to 252 (ARPELPERPP). Positions 253 to 262 (CKVRRRLFQE) are enriched in basic residues.

It belongs to the PRR23 family.

The protein is Proline-rich protein 23C (PRR23C) of Homo sapiens (Human).